The primary structure comprises 513 residues: Sterol 14-alpha demethylase rstn2 (513 aa).

The helical transmembrane segment at 3–23 (WPLIGAYALLAFVAIIALNVT) threads the bilayer. Cysteine 453 serves as a coordination point for heme.

The protein belongs to the cytochrome P450 family. The cofactor is heme.

The protein localises to the membrane. It catalyses the reaction a 14alpha-methyl steroid + 3 reduced [NADPH--hemoprotein reductase] + 3 O2 = a Delta(14) steroid + formate + 3 oxidized [NADPH--hemoprotein reductase] + 4 H2O + 4 H(+). The enzyme catalyses a 14alpha-methyl steroid + reduced [NADPH--hemoprotein reductase] + O2 = a 14alpha-hydroxymethyl steroid + oxidized [NADPH--hemoprotein reductase] + H2O + H(+). The catalysed reaction is a 14alpha-hydroxymethyl steroid + reduced [NADPH--hemoprotein reductase] + O2 = a 14alpha-formyl steroid + oxidized [NADPH--hemoprotein reductase] + 2 H2O + H(+). It carries out the reaction a 14alpha-formyl steroid + reduced [NADPH--hemoprotein reductase] + O2 = a Delta(14) steroid + formate + oxidized [NADPH--hemoprotein reductase] + H2O + 2 H(+). It catalyses the reaction lanosterol + 3 reduced [NADPH--hemoprotein reductase] + 3 O2 = 4,4-dimethyl-5alpha-cholesta-8,14,24-trien-3beta-ol + formate + 3 oxidized [NADPH--hemoprotein reductase] + 4 H2O + 4 H(+). The enzyme catalyses lanosterol + reduced [NADPH--hemoprotein reductase] + O2 = 32-hydroxylanosterol + oxidized [NADPH--hemoprotein reductase] + H2O + H(+). The catalysed reaction is 32-hydroxylanosterol + reduced [NADPH--hemoprotein reductase] + O2 = 32-oxolanosterol + oxidized [NADPH--hemoprotein reductase] + 2 H2O + H(+). It carries out the reaction 32-oxolanosterol + reduced [NADPH--hemoprotein reductase] + O2 = 4,4-dimethyl-5alpha-cholesta-8,14,24-trien-3beta-ol + formate + oxidized [NADPH--hemoprotein reductase] + H2O + 2 H(+). It catalyses the reaction eburicol + 3 reduced [NADPH--hemoprotein reductase] + 3 O2 = 14-demethyleburicol + formate + 3 oxidized [NADPH--hemoprotein reductase] + 4 H2O + 4 H(+). The enzyme catalyses eburicol + reduced [NADPH--hemoprotein reductase] + O2 = 32-hydroxyeburicol + oxidized [NADPH--hemoprotein reductase] + H2O + H(+). The catalysed reaction is 32-hydroxyeburicol + reduced [NADPH--hemoprotein reductase] + O2 = 32-oxoeburicol + oxidized [NADPH--hemoprotein reductase] + 2 H2O + H(+). It carries out the reaction 32-oxoeburicol + reduced [NADPH--hemoprotein reductase] + O2 = 14-demethyleburicol + formate + oxidized [NADPH--hemoprotein reductase] + H2O + 2 H(+). Its pathway is steroid biosynthesis; sterol biosynthesis. Its function is as follows. Sterol 14-alpha demethylase; part of the gene cluster that mediates the biosynthesis of the tetrahydropyranyl antifungal agent restricticin that acts as an inhibitor of CYP51 and blocks the ergosterol biosynthesis. Sterol 14-alpha-demethylase plays a critical role in the biosynthesis of ergosterol, the major sterol component in fungal membranes that participates in a variety of functions. Rtsn2 acts as a self-resistant CYP51 that contains mutations found in CYP51s isolated from azole resistance strains and that is not inhibited by the final product of the cluster, restricticin. The polypeptide is Sterol 14-alpha demethylase rstn2 (Aspergillus nomiae NRRL (strain ATCC 15546 / NRRL 13137 / CBS 260.88 / M93)).